A 311-amino-acid polypeptide reads, in one-letter code: T-cell acute lymphocytic leukemia protein 1 homolog (311 aa).

Over residues methionine 1–serine 14 the composition is skewed to pro residues. Residues methionine 1–alanine 67 form a disordered region. Residues aspartate 15–glutamate 25 show a composition bias toward basic and acidic residues. A bHLH domain is found at valine 179–leucine 231. The disordered stretch occupies residues serine 265–arginine 311. Residues threonine 284–histidine 294 show a composition bias toward basic and acidic residues.

Efficient DNA binding requires dimerization with another bHLH protein. Forms heterodimers with TCF3. Post-translationally, phosphorylated on serine residues.

The protein resides in the nucleus. Implicated in the genesis of hemopoietic malignancies. It may play an important role in hemopoietic differentiation. In Gallus gallus (Chicken), this protein is T-cell acute lymphocytic leukemia protein 1 homolog (TAL1).